The chain runs to 89 residues: Small ribosomal subunit protein uS15 (89 aa).

It belongs to the universal ribosomal protein uS15 family. In terms of assembly, part of the 30S ribosomal subunit. Forms a bridge to the 50S subunit in the 70S ribosome, contacting the 23S rRNA.

Functionally, one of the primary rRNA binding proteins, it binds directly to 16S rRNA where it helps nucleate assembly of the platform of the 30S subunit by binding and bridging several RNA helices of the 16S rRNA. Its function is as follows. Forms an intersubunit bridge (bridge B4) with the 23S rRNA of the 50S subunit in the ribosome. The protein is Small ribosomal subunit protein uS15 of Chlorobium phaeobacteroides (strain BS1).